We begin with the raw amino-acid sequence, 182 residues long: Large ribosomal subunit protein uL5 (182 aa).

It belongs to the universal ribosomal protein uL5 family. As to quaternary structure, part of the 50S ribosomal subunit; part of the 5S rRNA/L5/L18/L25 subcomplex. Contacts the 5S rRNA and the P site tRNA. Forms a bridge to the 30S subunit in the 70S ribosome.

Its function is as follows. This is one of the proteins that bind and probably mediate the attachment of the 5S RNA into the large ribosomal subunit, where it forms part of the central protuberance. In the 70S ribosome it contacts protein S13 of the 30S subunit (bridge B1b), connecting the 2 subunits; this bridge is implicated in subunit movement. Contacts the P site tRNA; the 5S rRNA and some of its associated proteins might help stabilize positioning of ribosome-bound tRNAs. This chain is Large ribosomal subunit protein uL5, found in Borreliella burgdorferi (strain ATCC 35210 / DSM 4680 / CIP 102532 / B31) (Borrelia burgdorferi).